We begin with the raw amino-acid sequence, 809 residues long: WD repeat protein iqw1 (809 aa).

5 WD repeats span residues 43 to 82 (GHTG…KPRH), 87 to 128 (GHVQ…EGGM), 141 to 180 (CALD…VCNQ), 193 to 233 (PYRI…KSFR), and 241 to 295 (SPEK…LFHV). Residues 599-644 (SMYTGHSDLNDDDDDYQDEESYSYASDDDDESDEDSDEGPTLLSLR) form a disordered region. Over residues 608 to 636 (NDDDDDYQDEESYSYASDDDDESDEDSDE) the composition is skewed to acidic residues. 2 WD repeats span residues 668–708 (CNVE…ILAI) and 711–750 (GDSE…PSGC).

As to quaternary structure, interacts with ddb1.

It localises to the cytoplasm. Ligand-dependent coactivator of nuclear receptors that may function as a substrate receptor for CUL4-DDB1 E3 ubiquitin-protein ligase complex. In Schizosaccharomyces pombe (strain 972 / ATCC 24843) (Fission yeast), this protein is WD repeat protein iqw1 (iqw1).